Consider the following 343-residue polypeptide: Protein-glutamate methylesterase/protein-glutamine glutaminase 2 (343 aa).

The Response regulatory domain occupies 5-122 (KVLVVDDSAI…SVGDMSGQLV (118 aa)). At Asp56 the chain carries 4-aspartylphosphate. Residues 154–343 (AETSNKVIAI…SIADEIVRMV (190 aa)) enclose the CheB-type methylesterase domain. Active-site residues include Ser166, His192, and Asp288.

It belongs to the CheB family. Post-translationally, phosphorylated by CheA. Phosphorylation of the N-terminal regulatory domain activates the methylesterase activity.

Its subcellular location is the cytoplasm. The catalysed reaction is [protein]-L-glutamate 5-O-methyl ester + H2O = L-glutamyl-[protein] + methanol + H(+). The enzyme catalyses L-glutaminyl-[protein] + H2O = L-glutamyl-[protein] + NH4(+). Its function is as follows. Involved in chemotaxis. Part of a chemotaxis signal transduction system that modulates chemotaxis in response to various stimuli. Catalyzes the demethylation of specific methylglutamate residues introduced into the chemoreceptors (methyl-accepting chemotaxis proteins or MCP) by CheR. Also mediates the irreversible deamidation of specific glutamine residues to glutamic acid. This is Protein-glutamate methylesterase/protein-glutamine glutaminase 2 from Syntrophus aciditrophicus (strain SB).